The sequence spans 254 residues: MRKYTRNTYTMSQKRKVNPQSAWPKKRRTSTTSRKYQWRRPVTKNRTLKLKMYDDMLGAGGIGSTISNNGMITMLNNYVQGIGDSQRARNVTVTKHLKFDMALMGSSQFWETPNYMTQYHWIIIDKDVGSVFPTKLSSIFDIPDNGQAMPSTYRIRRDMNERFIVKKKWRTHLMSTGTGYGGKETYKAPSMPNYKKPMNINVRNLNMRTIWKDTGGGKYEDVKENALLYVVVNDNTDNTNMYATLFGNCRCYFY.

Over residues 1–12 (MRKYTRNTYTMS) the composition is skewed to polar residues. Positions 1-38 (MRKYTRNTYTMSQKRKVNPQSAWPKKRRTSTTSRKYQW) are disordered. Residues 10–35 (TMSQKRKVNPQSAWPKKRRTSTTSRK) carry the Bipartite nuclear localization signal motif.

The protein belongs to the geminiviridae capsid protein family. As to quaternary structure, homomultimer. Binds to single-stranded and double-stranded viral DNA. Interacts (via nuclear localization signal) with host importin alpha-1a.

Its subcellular location is the virion. The protein resides in the host nucleus. Functionally, encapsidates the viral genome into characteristic twinned ('geminate') particles. Binds the genomic viral ssDNA and shuttles it into and out of the cell nucleus. Plays a role in protection of the genome from degradation, virus acquisition and transmission by insect vectors, infectivity, and systemic movement. The CP of monopartite geminiviruses is absolutely essential for virus movement. This is Capsid protein from Beet curly top virus (strain California/Logan) (BCTV).